A 92-amino-acid chain; its full sequence is Small ribosomal subunit protein uS17 (92 aa).

The protein belongs to the universal ribosomal protein uS17 family. As to quaternary structure, part of the 30S ribosomal subunit.

Its function is as follows. One of the primary rRNA binding proteins, it binds specifically to the 5'-end of 16S ribosomal RNA. The protein is Small ribosomal subunit protein uS17 of Corynebacterium diphtheriae (strain ATCC 700971 / NCTC 13129 / Biotype gravis).